Here is a 194-residue protein sequence, read N- to C-terminus: Pyridoxal 5'-phosphate synthase subunit PdxT (194 aa).

Position 50 to 52 (50 to 52) interacts with L-glutamine; sequence GES. Cys-82 (nucleophile) is an active-site residue. L-glutamine contacts are provided by residues Arg-109 and 136–137; that span reads IR. Active-site charge relay system residues include His-172 and Glu-174.

Belongs to the glutaminase PdxT/SNO family. As to quaternary structure, in the presence of PdxS, forms a dodecamer of heterodimers. Only shows activity in the heterodimer.

The catalysed reaction is aldehydo-D-ribose 5-phosphate + D-glyceraldehyde 3-phosphate + L-glutamine = pyridoxal 5'-phosphate + L-glutamate + phosphate + 3 H2O + H(+). It carries out the reaction L-glutamine + H2O = L-glutamate + NH4(+). The protein operates within cofactor biosynthesis; pyridoxal 5'-phosphate biosynthesis. Catalyzes the hydrolysis of glutamine to glutamate and ammonia as part of the biosynthesis of pyridoxal 5'-phosphate. The resulting ammonia molecule is channeled to the active site of PdxS. This chain is Pyridoxal 5'-phosphate synthase subunit PdxT, found in Streptococcus pneumoniae (strain CGSP14).